Here is a 729-residue protein sequence, read N- to C-terminus: Rab-like protein 6 (729 aa).

The residue at position 1 (methionine 1) is an N-acetylmethionine. The small GTPase-like stretch occupies residues 39 to 279 (GVQYNMKIVI…IFLEMMEARS (241 aa)). Residues 50–57 (GDRNTGKT), 100–104 (DVVDK), and 177–179 (YRD) contribute to the GTP site. The segment at 281–729 (GHASPLAANG…HPGGGDYEEL (449 aa)) is disordered. Residues 290–315 (GQSPSPGSQSPVVPAGAVSTGSSSPG) show a composition bias toward low complexity. Residues 331-351 (SSVPPVPPSEALPPPACPSAP) show a composition bias toward pro residues. Positions 395–416 (PDDRLDRSFLEDTTPARDEKKV) are enriched in basic and acidic residues. Phosphoserine is present on residues serine 402, serine 425, serine 427, serine 470, serine 471, serine 492, serine 525, and serine 577. Residues 489–502 (QQCSEPETKWSSIP) show a composition bias toward polar residues. Positions 581 to 595 (DTQRRADDFPVRDDP) are enriched in basic and acidic residues. Serine 596 is subject to Phosphoserine. The span at 596-605 (SDVTDEDEGP) shows a compositional bias: acidic residues. A Phosphothreonine modification is found at threonine 599. The segment covering 606 to 615 (AEPPPPPKLP) has biased composition (pro residues). Residues 635–652 (AGPKESSEEGKEGKTPSK) are compositionally biased toward basic and acidic residues. Phosphoserine occurs at positions 640 and 641. Residues 655 to 693 (KKKKKKGKEEEEKAAKKKSKHKKSKDKEEGKEERRRRQQ) form an interaction with CDKN2A region. Basic residues predominate over residues 669 to 678 (AKKKSKHKKS). A compositionally biased stretch (basic and acidic residues) spans 679-689 (KDKEEGKEERR). The span at 711–729 (LGGGAPGGRHPGGGDYEEL) shows a compositional bias: gly residues.

It belongs to the small GTPase superfamily. Rab family. Isoform 1 is O-glycosylated, while other isoforms are not.

The protein resides in the cytoplasm. The protein localises to the nucleus. Its function is as follows. May enhance cellular proliferation. May reduce growth inhibitory activity of CDKN2A. This chain is Rab-like protein 6 (RABL6), found in Homo sapiens (Human).